The primary structure comprises 261 residues: Cytochrome c oxidase subunit 3 (261 aa).

The Mitochondrial matrix segment spans residues 1 to 15 (MTHQTHAYHMVNPSP). Residues 16–34 (WPLTGALSALLMTSGLIMW) traverse the membrane as a helical segment. The Mitochondrial intermembrane segment spans residues 35-40 (FHFNST). The helical transmembrane segment at 41–66 (TLLMLGLTTNMLTMYQWWRDIIREST) threads the bilayer. The Mitochondrial matrix segment spans residues 67 to 72 (FQGHHT). A helical transmembrane segment spans residues 73–105 (PNVQKGLRYGMILFIISEVLFFTGFFWAFYHSS). The Mitochondrial intermembrane portion of the chain corresponds to 106–128 (LAPTPELGGCWPPTGIHPLNPLE). Residues 129-152 (VPLLNTSVLLASGVSITWAHHSLM) traverse the membrane as a helical segment. Residues 153–155 (EGN) are Mitochondrial matrix-facing. A helical transmembrane segment spans residues 156–183 (RNHMLQALFITIALGVYFTLLQASEYYE). Over 184-190 (APFTISD) the chain is Mitochondrial intermembrane. Residues 191 to 223 (GVYGSTFFVATGFHGLHVIIGSTFLIVCFFRQL) form a helical membrane-spanning segment. The Mitochondrial matrix segment spans residues 224 to 232 (KFHFTSSHH). Residues 233-256 (FGFEAAAWYWHFVDVVWLFLYVSI) traverse the membrane as a helical segment. At 257–261 (YWWGS) the chain is on the mitochondrial intermembrane side.

Belongs to the cytochrome c oxidase subunit 3 family. In terms of assembly, component of the cytochrome c oxidase (complex IV, CIV), a multisubunit enzyme composed of 14 subunits. The complex is composed of a catalytic core of 3 subunits MT-CO1, MT-CO2 and MT-CO3, encoded in the mitochondrial DNA, and 11 supernumerary subunits COX4I, COX5A, COX5B, COX6A, COX6B, COX6C, COX7A, COX7B, COX7C, COX8 and NDUFA4, which are encoded in the nuclear genome. The complex exists as a monomer or a dimer and forms supercomplexes (SCs) in the inner mitochondrial membrane with NADH-ubiquinone oxidoreductase (complex I, CI) and ubiquinol-cytochrome c oxidoreductase (cytochrome b-c1 complex, complex III, CIII), resulting in different assemblies (supercomplex SCI(1)III(2)IV(1) and megacomplex MCI(2)III(2)IV(2)).

The protein localises to the mitochondrion inner membrane. The catalysed reaction is 4 Fe(II)-[cytochrome c] + O2 + 8 H(+)(in) = 4 Fe(III)-[cytochrome c] + 2 H2O + 4 H(+)(out). In terms of biological role, component of the cytochrome c oxidase, the last enzyme in the mitochondrial electron transport chain which drives oxidative phosphorylation. The respiratory chain contains 3 multisubunit complexes succinate dehydrogenase (complex II, CII), ubiquinol-cytochrome c oxidoreductase (cytochrome b-c1 complex, complex III, CIII) and cytochrome c oxidase (complex IV, CIV), that cooperate to transfer electrons derived from NADH and succinate to molecular oxygen, creating an electrochemical gradient over the inner membrane that drives transmembrane transport and the ATP synthase. Cytochrome c oxidase is the component of the respiratory chain that catalyzes the reduction of oxygen to water. Electrons originating from reduced cytochrome c in the intermembrane space (IMS) are transferred via the dinuclear copper A center (CU(A)) of subunit 2 and heme A of subunit 1 to the active site in subunit 1, a binuclear center (BNC) formed by heme A3 and copper B (CU(B)). The BNC reduces molecular oxygen to 2 water molecules using 4 electrons from cytochrome c in the IMS and 4 protons from the mitochondrial matrix. The sequence is that of Cytochrome c oxidase subunit 3 (MT-CO3) from Litocranius walleri (Gerenuk).